The following is a 674-amino-acid chain: Probable 3',5'-cyclic-AMP phosphodiesterase pde-4 (674 aa).

Residues 1–82 (MPRRRGSSSS…TSSASSYHPP (82 aa)) are disordered. A compositionally biased stretch (gly residues) spans 15–24 (GGSGGGGGFG). Low complexity predominate over residues 39–62 (RTSSPSASSTSRTPPAALPPRTSA). The span at 66-78 (PGSNHKLTSSASS) shows a compositional bias: polar residues. Residues 328-660 (HVPEYGVNCA…EWYQSRIPEE (333 aa)) enclose the PDEase domain. The Proton donor role is filled by histidine 407. A divalent metal cation contacts are provided by histidine 411, histidine 447, aspartate 448, and aspartate 565.

The protein belongs to the cyclic nucleotide phosphodiesterase family. The cofactor is a divalent metal cation. In terms of tissue distribution, expressed in dorsal D (DD) motor neurons and several other neurons at the L1 stage. Expression in DD neurons decreases gradually beginning in the late L1 stage. Highly expressed in adult ventral D (VD) motor neurons, but diminished in adult DD motor neurons.

It carries out the reaction 3',5'-cyclic AMP + H2O = AMP + H(+). Hydrolyzes the second messenger 3',5'-cyclic AMP (cAMP), which is a key regulator of many important physiological processes. Antagonizes dorsal D (DD) motor neuron respecification by reducing levels of cAMP. This Caenorhabditis elegans protein is Probable 3',5'-cyclic-AMP phosphodiesterase pde-4 (pde-4).